The following is a 270-amino-acid chain: Secreted RxLR effector protein 149 (270 aa).

Positions 1–21 (MRNGVVLFGLFFIGYSSCVLA) are cleaved as a signal peptide. The RxLR-dEER signature appears at 43–58 (RTLQADDPERILAEER).

It belongs to the RxLR effector family.

The protein resides in the secreted. It is found in the host nucleus. The protein localises to the host cytoplasm. Functionally, secreted effector that completely suppresses the host cell death induced by cell death-inducing proteins. In Plasmopara viticola (Downy mildew of grapevine), this protein is Secreted RxLR effector protein 149.